The chain runs to 1663 residues: MSIDFDSGALQTQQEDEEYDKEDYAREQELQQLLTDLPHDMLDDSLSSSPEPSYSDCSGHEISEKIPQWEHGANWGNDDLPNHQKPYKNGFTENQYCMGFVGKQDEHLRNQAGRDKMSNGWDVLHANEDDPMFNGKYRYSKDHAYNSESNGQAFHGGDHYDAPGHCSSSELYHLPDDFQPYTNCQQVEHFPDSKKEHFQGFAVPEETSKISTEPFQVKYNPYQIKVARMDEMNQDPERRDGNFDDLQREFLDTGENSTGNMQFVQLQVLYKARGRQLEEQNNKLEESERQIRYLNHQLAIVKDQKDGLTISLQESQSLLQNSREMEIQLKGQLTALEKTVESLTTNEEQLRKELNISKVAMESFQQQLLDLRRSESIQRAREQHETVVSMLKKKHEEQVLALQQKLDDVNAMLNEEKELCSRLETRLKLSERKEAESKLEKTDIINRLSKSLEESQKQCANLLQSGSIQEATQLRLQLQQVQSSKIINDGMNKALQEEVRELQEQITMYESAARLGAFVNSGEEQQLSDSYVELGIKNFNWQKSRLGRIVANNGVKNDLSSEEIILELKTELERCLNSNKTKRKQIVQLQAELKGHLLKNEELKKSMEIAERTARDSQIQAENLANKVNNSPFYSSSSDRFREEIQKLQSEKQILQQENEKHLLFIKEFTVNEEKLKASNQELCNEMRGMIQDFDQDKKEAIERCERTYEQHNEDIKAHLLNELYEKFESEKELLSQGYEEKITLLQAQMNEIHREMAAVQECYIAVCKEKDALEENMREHFKKELQKSEEEVTAKAIQDVEMEWAQKLNQALQDAKTKSLQSFETQTIQTDESSLAKSDLNSDCIDELKVKLQNAIQEKEKAVHQAQLELEERHHEETSKQVEVALTRAYGRWLQELTSLPEYKARLKLEQEKWEKTNERNVERQVSDALYAAEIKWKMRSDKVDFTVRQKEFEEKIASMKRELELKAEESQALLKAEIATSRAQWNKEKHDEIQRLREDNEKDYRVFLDEHRNKLTDTLSTAKVEFEKQKNELIAQKDREMAERLDESLKQWALDESRRMRALENEILSEVEQCMYEIHDQLLDKSIVKDRLPSMKSNLDVTFLEKLKACLQKSVKGILYKVLANARQDWKKKYDTESNQETGIRGGELEGSDDRKTAKMWYLDKDLGKTEKQPCCEHWVQQLEKSKKECYEIRSKLEKACRHLQQLVKEQKLKAEKYRKNHILTEELKKQNSELQKKLELTVAPSPACLEPVEGGSNGCMMCNGNALEEIRAQYIKAVDKIKNDMLRYIHESKGRAAELLKSEVLRERQETARKMRKYYLTCLQQLLKDDGNNEGAEKKIINAASKLATMAKVLETPVSQKYQSKSLNSDLPQNENFLSETTQDQRSLQKPAHSHQNNNPLNQNIDQQTIEELIKRHVREKSDGNKVTDAEGASAINENSSFPTLRKSLVDNGNSQFVPSAPFQKLKTFSCIDSSTEGVLVTHQNKQSALQSGTLYPNSEHPKKKPGLQRFDLQETPVRDENGSNDWSCISSKSLFQPHSAKGSLTQLKMGPQNADVEEHSSAVASCSLAEENHNTFSSGARNQHFFAQVAKRKDENSGRKYSNKIQEPSATGIHPESKLFSDVGQGNKLPSRKLLLDFTLSPQQDSGFDSPFPNLNNFN.

The disordered stretch occupies residues 1–60 (MSIDFDSGALQTQQEDEEYDKEDYAREQELQQLLTDLPHDMLDDSLSSSPEPSYSDCSGH). The segment covering 44–57 (DSLSSSPEPSYSDC) has biased composition (low complexity). Coiled coils occupy residues 266–516 (LQVL…ARLG), 571–664 (ELER…KHLL), 696–796 (QDKK…VTAK), 843–886 (SDCI…VEVA), 946–977 (DFTV…ALLK), 1014–1047 (RNKL…AERL), and 1182–1288 (VQQL…KNDM). 2 disordered regions span residues 1383–1408 (ETTQ…NQNI) and 1595–1628 (KRKD…SDVG). The segment covering 1603–1613 (RKYSNKIQEPS) has biased composition (polar residues).

Belongs to the CEP152 family.

Its subcellular location is the cytoplasm. It localises to the cytoskeleton. The protein resides in the microtubule organizing center. It is found in the centrosome. The protein localises to the centriole. Functionally, necessary for centrosome duplication; the function also seems to involve cep63, cdk5rap2 and wdr62 through a stepwise assembled complex at the centrosome that recruits cdk2 required for centriole duplication. Acts as a molecular scaffold facilitating the interaction of plk4 and cpap, 2 molecules involved in centriole formation. Also plays a key role in deuterosome-mediated centriole amplification in multiciliated that can generate more than 100 centrioles. Overexpression of cep152 can drive amplification of centrioles. In Xenopus laevis (African clawed frog), this protein is Centrosomal protein of 152 kDa (cep152).